A 388-amino-acid chain; its full sequence is 1-deoxy-D-xylulose 5-phosphate reductoisomerase (388 aa).

Positions 10, 11, 12, 13, 37, and 121 each coordinate NADPH. Residue K122 coordinates 1-deoxy-D-xylulose 5-phosphate. E123 is an NADPH binding site. A Mn(2+)-binding site is contributed by D147. 1-deoxy-D-xylulose 5-phosphate is bound by residues S148, E149, S173, and H196. E149 contributes to the Mn(2+) binding site. Residue G202 coordinates NADPH. Positions 209, 214, 215, and 218 each coordinate 1-deoxy-D-xylulose 5-phosphate. E218 lines the Mn(2+) pocket.

It belongs to the DXR family. The cofactor is Mg(2+). Mn(2+) serves as cofactor.

It catalyses the reaction 2-C-methyl-D-erythritol 4-phosphate + NADP(+) = 1-deoxy-D-xylulose 5-phosphate + NADPH + H(+). It functions in the pathway isoprenoid biosynthesis; isopentenyl diphosphate biosynthesis via DXP pathway; isopentenyl diphosphate from 1-deoxy-D-xylulose 5-phosphate: step 1/6. Its function is as follows. Catalyzes the NADPH-dependent rearrangement and reduction of 1-deoxy-D-xylulose-5-phosphate (DXP) to 2-C-methyl-D-erythritol 4-phosphate (MEP). The sequence is that of 1-deoxy-D-xylulose 5-phosphate reductoisomerase from Lachnoclostridium phytofermentans (strain ATCC 700394 / DSM 18823 / ISDg) (Clostridium phytofermentans).